The following is a 464-amino-acid chain: 3-isopropylmalate dehydratase large subunit (464 aa).

The [4Fe-4S] cluster site is built by Cys337, Cys397, and Cys400.

Belongs to the aconitase/IPM isomerase family. LeuC type 1 subfamily. As to quaternary structure, heterodimer of LeuC and LeuD. [4Fe-4S] cluster is required as a cofactor.

It carries out the reaction (2R,3S)-3-isopropylmalate = (2S)-2-isopropylmalate. Its pathway is amino-acid biosynthesis; L-leucine biosynthesis; L-leucine from 3-methyl-2-oxobutanoate: step 2/4. In terms of biological role, catalyzes the isomerization between 2-isopropylmalate and 3-isopropylmalate, via the formation of 2-isopropylmaleate. This chain is 3-isopropylmalate dehydratase large subunit, found in Bacillus thuringiensis (strain Al Hakam).